A 677-amino-acid polypeptide reads, in one-letter code: Mitochondrial disaggregase (677 aa).

Residues 1-57 (MMLSAVLRRTAPAPRLFLGLIKSPSLQSRGGAYNRSVITGDRGEPQRLRTAAWVRPG) constitute a mitochondrion transit peptide. A disordered region spans residues 64–103 (PGRGAATGGRRGERTEIPYLTAASSGRGPSPEETLPGQDS). Positions 92–126 (PSPEETLPGQDSWNGVPNKAGLGMWALAMALVVQC) are autoinhibitory. ANK repeat units lie at residues 133-162 (NKDA…DVNA), 166-195 (LGWT…DPNL), 235-265 (KGCT…PLQR), and 268-297 (MGHT…EKQR). Residues His316, Ile318, Ser353, Gly354, Ile355, Gly356, Lys357, Thr358, Glu425, and Asn466 each contribute to the ATP site. Residues 477–505 (LQLRQEALEMSRNRIAENLGDVQISDKIT) form a regulatory; slows ATPase and disaggregase activities region. Arg531 serves as a coordination point for ATP. Position 559 is an N6-acetyllysine (Lys559). Residue Arg590 coordinates ATP.

Belongs to the ClpA/ClpB family. As to quaternary structure, homododecamer when substrate-bound; the homododecamer consists of 2 homohexamers stacked head-to-head via ANK repeat-mediated interactions. The active substrate-bound form is likely to exist in a dynamic equilibrium between homohexamers and homododecamers. Homotetradecamer in the unbound state which is remodeled upon substrate binding into the homododecamer. Interacts with PHB and PHB2. Interacts with MAVS; the interaction is enhanced by Sendai virus infection. Proteolytically cleaved by protease PARL. ATP-dependent protein disaggregase activity is stimulated by PARL-mediated cleavage of the N-terminal autoinhibitory peptide.

It localises to the mitochondrion intermembrane space. The enzyme catalyses ATP + H2O = ADP + phosphate + H(+). Its activity is regulated as follows. Disaggregase activity is inhibited by ADP. Functionally, functions as a regulatory ATPase and participates in secretion/protein trafficking process. Has ATP-dependent protein disaggregase activity and is required to maintain the solubility of key mitochondrial proteins. Involved in mitochondrial-mediated antiviral innate immunity, activates RIG-I-mediated signal transduction and production of IFNB1 and pro-inflammatory cytokine IL6. Plays a role in granulocyte differentiation. The protein is Mitochondrial disaggregase of Rattus norvegicus (Rat).